The primary structure comprises 472 residues: Glutamate-1-semialdehyde 2,1-aminomutase 2, chloroplastic (472 aa).

A chloroplast-targeting transit peptide spans 1 to 36 (MAATLTGSGIALGFSCSAKFSKRASSSSNRRCIKMS). N6-(pyridoxal phosphate)lysine is present on K312.

Belongs to the class-III pyridoxal-phosphate-dependent aminotransferase family. HemL subfamily. In terms of assembly, homodimer. It depends on pyridoxal 5'-phosphate as a cofactor. As to expression, expressed in leaf primordia and shoot apical meristems (SAM).

The protein resides in the plastid. It is found in the chloroplast. The enzyme catalyses (S)-4-amino-5-oxopentanoate = 5-aminolevulinate. The protein operates within porphyrin-containing compound metabolism; protoporphyrin-IX biosynthesis; 5-aminolevulinate from L-glutamyl-tRNA(Glu): step 2/2. It functions in the pathway porphyrin-containing compound metabolism; chlorophyll biosynthesis. In terms of biological role, transaminase converting glutamate 1-semialdehyde (GSA) to 5-aminolevulinate (ALA). Involved in the biosynthesis of tetrapyrroles. The polypeptide is Glutamate-1-semialdehyde 2,1-aminomutase 2, chloroplastic (Arabidopsis thaliana (Mouse-ear cress)).